The chain runs to 496 residues: Probable chlorophyll(ide) b reductase NYC1, chloroplastic (496 aa).

The transit peptide at 1–43 (MTTLTKIQVYPQVLEHRLFFRDPIRVGSRLTCRERSNRVYVHR) directs the protein to the chloroplast. Transmembrane regions (helical) follow at residues 105 to 125 (YIVT…LSGG) and 132 to 152 (LVWY…ANMV). 166–190 (ITGSTRGLGKALAREFLLSGDRVIV) serves as a coordination point for NAD(+). A coiled-coil region spans residues 195–224 (SESVDMTVKELEQNLKEIMSNASESARKKL). Y330 functions as the Proton acceptor in the catalytic mechanism. Residues 470–490 (WVSVFSLSVVCAFIILQSTTP) traverse the membrane as a helical segment.

The protein belongs to the short-chain dehydrogenases/reductases (SDR) family. In terms of assembly, interacts with NOL to form a complex that acts as a chlorophyll b reductase. Interacts with HCAR, RCCR, SGR1 and the LHCII complex. Part of a SGR1-CCE-LHCII complex, which acts in chlorophyll breakdown.

The protein resides in the plastid. Its subcellular location is the chloroplast thylakoid membrane. It catalyses the reaction 7(1)-hydroxychlorophyllide a + NAD(+) = chlorophyllide b + NADH + H(+). The catalysed reaction is 7(1)-hydroxychlorophyllide a + NADP(+) = chlorophyllide b + NADPH + H(+). In terms of biological role, involved in chlorophyll b degradation. Belongs to the chlorophyll catabolic enzymes (CCEs). This chain is Probable chlorophyll(ide) b reductase NYC1, chloroplastic (NYC1), found in Arabidopsis thaliana (Mouse-ear cress).